Here is a 600-residue protein sequence, read N- to C-terminus: Translation initiation factor IF-2 (600 aa).

A tr-type G domain is found at 112–279; that stretch reads ERAPIITVMG…AINLQAEILE (168 aa). Residues 121-128 form a G1 region; it reads GHVDHGKT. 121 to 128 lines the GTP pocket; the sequence is GHVDHGKT. The segment at 146–150 is G2; the sequence is GITQH. The tract at residues 167–170 is G3; sequence DTPG. GTP-binding positions include 167–171 and 221–224; these read DTPGH and NKMD. The G4 stretch occupies residues 221 to 224; the sequence is NKMD. The interval 257–259 is G5; the sequence is SAL.

It belongs to the TRAFAC class translation factor GTPase superfamily. Classic translation factor GTPase family. IF-2 subfamily.

The protein resides in the cytoplasm. Functionally, one of the essential components for the initiation of protein synthesis. Protects formylmethionyl-tRNA from spontaneous hydrolysis and promotes its binding to the 30S ribosomal subunits. Also involved in the hydrolysis of GTP during the formation of the 70S ribosomal complex. The sequence is that of Translation initiation factor IF-2 from Mycoplasma mobile (strain ATCC 43663 / 163K / NCTC 11711) (Mesomycoplasma mobile).